Here is a 663-residue protein sequence, read N- to C-terminus: Transforming growth factor beta activator LRRC32 (663 aa).

The signal sequence occupies residues 1 to 17 (MSHQILLLLAMLTLGLA). Residues 18 to 628 (ISQRREQVPC…CEKGGLKNVN (611 aa)) lie on the Extracellular side of the membrane. Residues 22–49 (REQVPCRTVNKEALCHGLGLLQVPSVLS) form the LRRNT domain. LRR repeat units lie at residues 49–72 (SLDI…PLGF), 73–96 (YTAL…VFQA), 98–123 (PYLE…GLGR), 125–148 (PLLV…LLGE), 149–172 (TPRL…TFWG), 174–196 (PAVE…AFEA), 197–220 (LPHL…SLQQ), 222–241 (QVLD…PEPQ), 243–267 (QFQL…VFPR), and 269–287 (IYLN…LPRG). Asparagine 204 carries an N-linked (GlcNAc...) asparagine glycan. Asparagine 272, asparagine 305, and asparagine 309 each carry an N-linked (GlcNAc...) asparagine glycan. A disordered region spans residues 291 to 311 (LHAPSEGWSASPLSNPSRNAS). Residues 301–311 (SPLSNPSRNAS) are compositionally biased toward polar residues. 11 LRR repeats span residues 315–338 (LSQL…FLEH), 340–362 (TSLR…QVDS), 363–386 (LPCL…TKVL), 387–409 (GSLQ…TFAS), 411–433 (ASLQ…AEPG), 443–466 (IPTL…SFLH), 468–489 (PLTE…ALVG), 491–514 (EASL…LPCF), 515–539 (LRLK…AVSL), 541–559 (VLDL…AMGG), and 561–584 (ETSL…WLAA). A glycan (N-linked (GlcNAc...) asparagine) is linked at asparagine 346. Asparagine 546 is a glycosylation site (N-linked (GlcNAc...) asparagine). Positions 572–621 (NPLSCCGNGWLAAQLHQGRVDVDATQDLICRFGSQEELSLSLVRPEDCEK) constitute an LRRCT domain. The helical transmembrane segment at 629–649 (LILLLSFTLVSAIVLTTLATI) threads the bilayer. Topologically, residues 650–663 (CFLRRQKLSQQYKA) are cytoplasmic.

The protein belongs to the LRRC32/LRRC33 family. As to quaternary structure, interacts with TGFB1; associates via disulfide bonds with the Latency-associated peptide chain (LAP) regulatory chain of TGFB1, leading to regulate activation of TGF-beta-1. Interacts with TGFB2. Interacts with TGFB3; associates via disulfide bonds with the Latency-associated peptide chain (LAP) regulatory chain of TGFB3, leading to regulate activation of TGF-beta-3. Interacts with LAPTM4B; decreases TGFB1 production in regulatory T-cells. Present in medial edge epithelial cells at 14.5 dpc (at protein level).

The protein resides in the cell membrane. It localises to the cell surface. In terms of biological role, key regulator of transforming growth factor beta (TGFB1, TGFB2 and TGFB3) that controls TGF-beta activation by maintaining it in a latent state during storage in extracellular space. Associates specifically via disulfide bonds with the Latency-associated peptide (LAP), which is the regulatory chain of TGF-beta, and regulates integrin-dependent activation of TGF-beta. Able to outcompete LTBP1 for binding to LAP regulatory chain of TGF-beta. Controls activation of TGF-beta-1 (TGFB1) on the surface of activated regulatory T-cells (Tregs). Required for epithelial fusion during palate development by regulating activation of TGF-beta-3 (TGFB3). The protein is Transforming growth factor beta activator LRRC32 of Mus musculus (Mouse).